The following is a 101-amino-acid chain: Putative pterin-4-alpha-carbinolamine dehydratase (101 aa).

This sequence belongs to the pterin-4-alpha-carbinolamine dehydratase family.

It carries out the reaction (4aS,6R)-4a-hydroxy-L-erythro-5,6,7,8-tetrahydrobiopterin = (6R)-L-erythro-6,7-dihydrobiopterin + H2O. The protein is Putative pterin-4-alpha-carbinolamine dehydratase of Rhodopseudomonas palustris (strain HaA2).